We begin with the raw amino-acid sequence, 295 residues long: 4-hydroxy-tetrahydrodipicolinate synthase (295 aa).

T48 lines the pyruvate pocket. Y136 (proton donor/acceptor) is an active-site residue. K164 (schiff-base intermediate with substrate) is an active-site residue. I206 is a binding site for pyruvate.

This sequence belongs to the DapA family. As to quaternary structure, homotetramer; dimer of dimers.

It is found in the cytoplasm. It carries out the reaction L-aspartate 4-semialdehyde + pyruvate = (2S,4S)-4-hydroxy-2,3,4,5-tetrahydrodipicolinate + H2O + H(+). Its pathway is amino-acid biosynthesis; L-lysine biosynthesis via DAP pathway; (S)-tetrahydrodipicolinate from L-aspartate: step 3/4. Catalyzes the condensation of (S)-aspartate-beta-semialdehyde [(S)-ASA] and pyruvate to 4-hydroxy-tetrahydrodipicolinate (HTPA). The sequence is that of 4-hydroxy-tetrahydrodipicolinate synthase from Actinobacillus pleuropneumoniae serotype 5b (strain L20).